The chain runs to 297 residues: ER membrane protein complex subunit 2-B (297 aa).

3 TPR repeats span residues 87–120, 155–188, and 192–225; these read HRVK…DPTN, QEAW…NPHN, and YQQF…NNHS.

Belongs to the EMC2 family. As to quaternary structure, component of the ER membrane protein complex (EMC).

The protein resides in the endoplasmic reticulum membrane. In terms of biological role, part of the endoplasmic reticulum membrane protein complex (EMC) that enables the energy-independent insertion into endoplasmic reticulum membranes of newly synthesized membrane proteins. Preferentially accommodates proteins with transmembrane domains that are weakly hydrophobic or contain destabilizing features such as charged and aromatic residues. Involved in the cotranslational insertion of multi-pass membrane proteins in which stop-transfer membrane-anchor sequences become ER membrane spanning helices. It is also required for the post-translational insertion of tail-anchored/TA proteins in endoplasmic reticulum membranes. By mediating the proper cotranslational insertion of N-terminal transmembrane domains in an N-exo topology, with translocated N-terminus in the lumen of the ER, controls the topology of multi-pass membrane proteins. By regulating the insertion of various proteins in membranes, it is indirectly involved in many cellular processes. The sequence is that of ER membrane protein complex subunit 2-B (emc2-b) from Xenopus laevis (African clawed frog).